The chain runs to 300 residues: tRNA dimethylallyltransferase (300 aa).

9–16 (GTTASGKS) contributes to the ATP binding site. A substrate-binding site is contributed by 11 to 16 (TASGKS). The tract at residues 34–37 (DSLC) is interaction with substrate tRNA.

The protein belongs to the IPP transferase family. In terms of assembly, monomer. It depends on Mg(2+) as a cofactor.

The enzyme catalyses adenosine(37) in tRNA + dimethylallyl diphosphate = N(6)-dimethylallyladenosine(37) in tRNA + diphosphate. Catalyzes the transfer of a dimethylallyl group onto the adenine at position 37 in tRNAs that read codons beginning with uridine, leading to the formation of N6-(dimethylallyl)adenosine (i(6)A). The polypeptide is tRNA dimethylallyltransferase (Campylobacter fetus subsp. fetus (strain 82-40)).